The primary structure comprises 411 residues: Adenylosuccinate synthetase (411 aa).

Residues 11-17 (GDEGKGK) and 39-41 (GHT) contribute to the GTP site. The active-site Proton acceptor is Asp12. Mg(2+) contacts are provided by Asp12 and Gly39. Residues 12–15 (DEGK), 37–40 (NAGH), Thr121, Arg135, Gln215, Thr230, and Arg294 each bind IMP. Residue His40 is the Proton donor of the active site. 290 to 296 (TTTKRPR) is a binding site for substrate. GTP-binding positions include Arg296, 322–324 (KLD), and 400–402 (STS).

This sequence belongs to the adenylosuccinate synthetase family. Homodimer. The cofactor is Mg(2+).

It localises to the cytoplasm. It catalyses the reaction IMP + L-aspartate + GTP = N(6)-(1,2-dicarboxyethyl)-AMP + GDP + phosphate + 2 H(+). The protein operates within purine metabolism; AMP biosynthesis via de novo pathway; AMP from IMP: step 1/2. Functionally, plays an important role in the de novo pathway of purine nucleotide biosynthesis. Catalyzes the first committed step in the biosynthesis of AMP from IMP. This is Adenylosuccinate synthetase from Helicobacter pylori (strain P12).